Here is a 299-residue protein sequence, read N- to C-terminus: MASPELELVRELIELNWHTRNGEVEPRRIAYDRAQEAFGNLGVPPGDVVTVGHCTAEWVRPARQDGRTLLYLHGGSYALGSPQSHRHLSSALGDAAGAAVLALHYRRPPESPFPAAVEDAVAAYRMLLEQGCPPGRVTLAGDSAGAGLAVAALQALRDAGTPLPAAAVCISPWADLACEGASHTTRKAREILLDTADLRRMAERYLAGTDPRHPLASPAHGDLTGLPPLLIQVGSEEVLHDDARALEQAALKAGTPVTFEEWPEMFHVWHWYHPVLPEGRRAIEVAGAFLRTATGEGLK.

Residues 73–75 (HGG) carry the Involved in the stabilization of the negatively charged intermediate by the formation of the oxyanion hole motif. Residues Ser-143, Glu-237, and His-267 contribute to the active site.

The protein belongs to the 'GDXG' lipolytic enzyme family.

The protein operates within secondary metabolite biosynthesis; bialaphos biosynthesis. Its function is as follows. This protein removes the N-acetyl group from bialaphos as one of the final steps of biosynthesis of phosphinothricin tripeptide (PTT), also known as bialaphos (BA), a natural-product antibiotic and potent herbicide. This is Acetyl-hydrolase (bah) from Streptomyces hygroscopicus.